A 124-amino-acid polypeptide reads, in one-letter code: Fluoride-specific ion channel FluC (124 aa).

4 consecutive transmembrane segments (helical) span residues 4–24, 32–52, 67–87, and 96–116; these read IVAIALFGALGCLARYLLAGW, GFPYGTLTVNVVGAFLIGLIM, IGLTIGFLGGLTTFSTFSYET, and FITAAVNVLASVLVCLACTWL. Na(+)-binding residues include Gly-75 and Thr-78.

It belongs to the fluoride channel Fluc/FEX (TC 1.A.43) family.

The protein localises to the cell inner membrane. It catalyses the reaction fluoride(in) = fluoride(out). Na(+) is not transported, but it plays an essential structural role and its presence is essential for fluoride channel function. In terms of biological role, fluoride-specific ion channel. Important for reducing fluoride concentration in the cell, thus reducing its toxicity. The sequence is that of Fluoride-specific ion channel FluC from Geobacter metallireducens (strain ATCC 53774 / DSM 7210 / GS-15).